Consider the following 151-residue polypeptide: Deoxyuridine 5'-triphosphate nucleotidohydrolase (151 aa).

Residues Arg70–Gly72, Asn83, Leu87–Asp89, and Met97 contribute to the substrate site.

The protein belongs to the dUTPase family. Mg(2+) serves as cofactor.

It carries out the reaction dUTP + H2O = dUMP + diphosphate + H(+). The protein operates within pyrimidine metabolism; dUMP biosynthesis; dUMP from dCTP (dUTP route): step 2/2. In terms of biological role, this enzyme is involved in nucleotide metabolism: it produces dUMP, the immediate precursor of thymidine nucleotides and it decreases the intracellular concentration of dUTP so that uracil cannot be incorporated into DNA. This chain is Deoxyuridine 5'-triphosphate nucleotidohydrolase, found in Pseudomonas putida (strain W619).